The primary structure comprises 417 residues: Exodeoxyribonuclease 7 large subunit (417 aa).

It belongs to the XseA family. As to quaternary structure, heterooligomer composed of large and small subunits.

It localises to the cytoplasm. It carries out the reaction Exonucleolytic cleavage in either 5'- to 3'- or 3'- to 5'-direction to yield nucleoside 5'-phosphates.. In terms of biological role, bidirectionally degrades single-stranded DNA into large acid-insoluble oligonucleotides, which are then degraded further into small acid-soluble oligonucleotides. This chain is Exodeoxyribonuclease 7 large subunit, found in Helicobacter hepaticus (strain ATCC 51449 / 3B1).